We begin with the raw amino-acid sequence, 360 residues long: Phospho-N-acetylmuramoyl-pentapeptide-transferase (360 aa).

10 helical membrane-spanning segments follow: residues 18-38 (VFSY…FISL), 73-93 (TMGG…WADL), 94-114 (SNIY…VGFV), 134-154 (YFWQ…IAQG), 168-188 (LLPQ…VGTS), 199-219 (GLAI…AYVT), 239-259 (LVIV…FNTY), 263-283 (VFMG…IAIL), 288-308 (LVLF…ILQV), and 338-358 (VIVR…ATLK).

The protein belongs to the glycosyltransferase 4 family. MraY subfamily. Mg(2+) is required as a cofactor.

The protein resides in the cell inner membrane. It catalyses the reaction UDP-N-acetyl-alpha-D-muramoyl-L-alanyl-gamma-D-glutamyl-meso-2,6-diaminopimeloyl-D-alanyl-D-alanine + di-trans,octa-cis-undecaprenyl phosphate = di-trans,octa-cis-undecaprenyl diphospho-N-acetyl-alpha-D-muramoyl-L-alanyl-D-glutamyl-meso-2,6-diaminopimeloyl-D-alanyl-D-alanine + UMP. It functions in the pathway cell wall biogenesis; peptidoglycan biosynthesis. Catalyzes the initial step of the lipid cycle reactions in the biosynthesis of the cell wall peptidoglycan: transfers peptidoglycan precursor phospho-MurNAc-pentapeptide from UDP-MurNAc-pentapeptide onto the lipid carrier undecaprenyl phosphate, yielding undecaprenyl-pyrophosphoryl-MurNAc-pentapeptide, known as lipid I. This Colwellia psychrerythraea (strain 34H / ATCC BAA-681) (Vibrio psychroerythus) protein is Phospho-N-acetylmuramoyl-pentapeptide-transferase.